The following is a 201-amino-acid chain: MTDSHRPDADDIPDDDELSTDFSNQFLLAMPGVVEGSLAGTVIYICEHTRRGALGLVINRPTDLTLATLFERIDLKLEIGPVKDEMVFFGGPVQTDRGFVLHAPAGDYTSSINLGELALTTSRDVLQAVADGNGPARMLVTLGYAGWGAGQLESEMAQNSWLSVGADSHIIFDVAPEDRYPAALKLLGVDPVMLAGGAGHA.

Belongs to the UPF0301 (AlgH) family.

The polypeptide is UPF0301 protein BP0319 (Bordetella pertussis (strain Tohama I / ATCC BAA-589 / NCTC 13251)).